The chain runs to 347 residues: GMP reductase (347 aa).

Position 108 to 131 (108 to 131 (ADFEKTKQILDLNPALNFVCIDVA)) interacts with NADP(+). Positions 181 and 183 each coordinate K(+). Cysteine 186 functions as the Thioimidate intermediate in the catalytic mechanism. 216–239 (IVSDGGCTTPGDVAKAFGGGADFV) serves as a coordination point for NADP(+).

It belongs to the IMPDH/GMPR family. GuaC type 1 subfamily. As to quaternary structure, homotetramer.

The enzyme catalyses IMP + NH4(+) + NADP(+) = GMP + NADPH + 2 H(+). Its function is as follows. Catalyzes the irreversible NADPH-dependent deamination of GMP to IMP. It functions in the conversion of nucleobase, nucleoside and nucleotide derivatives of G to A nucleotides, and in maintaining the intracellular balance of A and G nucleotides. The sequence is that of GMP reductase from Escherichia coli O127:H6 (strain E2348/69 / EPEC).